Here is a 424-residue protein sequence, read N- to C-terminus: Protein ORF114 (424 aa).

The protein resides in the host cytoplasm. Its function is as follows. Plays a role in per os infectivity in vivo. Facilitates embedding of occlusion-derived viruses (ODVs) into occlusion bodies (OBs). This is Protein ORF114 from Lepidoptera (butterflies and moths).